Reading from the N-terminus, the 759-residue chain is Putative ATP-dependent DNA helicase YjcD (759 aa).

The segment at Ala68–Pro121 is disordered. A compositionally biased stretch (basic and acidic residues) spans Cys69–Asp81. The UvrD-like helicase ATP-binding domain occupies Val134–Thr413. ATP is bound by residues Gly158 to Arg163 and Arg411. A UvrD-like helicase C-terminal domain is found at His414 to Gly676.

Belongs to the helicase family. UvrD subfamily.

The protein localises to the cytoplasm. It catalyses the reaction Couples ATP hydrolysis with the unwinding of duplex DNA by translocating in the 3'-5' direction.. It carries out the reaction ATP + H2O = ADP + phosphate + H(+). In terms of biological role, may be involved in the generation of recombinogenic substrates for the subsequent action of RecA. The polypeptide is Putative ATP-dependent DNA helicase YjcD (yjcD) (Bacillus subtilis (strain 168)).